Reading from the N-terminus, the 375-residue chain is Queuine tRNA-ribosyltransferase (375 aa).

The active-site Proton acceptor is the D90. Substrate-binding positions include 90–94 (DSGGF), D144, Q193, and G220. The segment at 251–257 (GVGTPED) is RNA binding. Catalysis depends on D270, which acts as the Nucleophile. The interval 275-279 (TRNAR) is RNA binding; important for wobble base 34 recognition. Zn(2+) is bound by residues C308, C310, C313, and H339.

This sequence belongs to the queuine tRNA-ribosyltransferase family. Homodimer. Within each dimer, one monomer is responsible for RNA recognition and catalysis, while the other monomer binds to the replacement base PreQ1. Requires Zn(2+) as cofactor.

The catalysed reaction is 7-aminomethyl-7-carbaguanine + guanosine(34) in tRNA = 7-aminomethyl-7-carbaguanosine(34) in tRNA + guanine. Its pathway is tRNA modification; tRNA-queuosine biosynthesis. Catalyzes the base-exchange of a guanine (G) residue with the queuine precursor 7-aminomethyl-7-deazaguanine (PreQ1) at position 34 (anticodon wobble position) in tRNAs with GU(N) anticodons (tRNA-Asp, -Asn, -His and -Tyr). Catalysis occurs through a double-displacement mechanism. The nucleophile active site attacks the C1' of nucleotide 34 to detach the guanine base from the RNA, forming a covalent enzyme-RNA intermediate. The proton acceptor active site deprotonates the incoming PreQ1, allowing a nucleophilic attack on the C1' of the ribose to form the product. After dissociation, two additional enzymatic reactions on the tRNA convert PreQ1 to queuine (Q), resulting in the hypermodified nucleoside queuosine (7-(((4,5-cis-dihydroxy-2-cyclopenten-1-yl)amino)methyl)-7-deazaguanosine). The polypeptide is Queuine tRNA-ribosyltransferase (Herminiimonas arsenicoxydans).